The chain runs to 392 residues: Bifunctional enzyme Fae/Hps (392 aa).

The formaldehyde-activating enzyme stretch occupies residues 1-161 (MFLVGEALIG…YEKERSVHPV (161 aa)). The active-site Proton donor is the histidine 17. Substrate is bound by residues aspartate 19, leucine 48, lysine 66, threonine 68, and glutamine 83. The interval 162-392 (MGYRVMRLWD…IDQYRIMTDF (231 aa)) is 3-hexulose-6-phosphate synthase.

It in the N-terminal section; belongs to the formaldehyde-activating enzyme family. In the C-terminal section; belongs to the HPS/KGPDC family. HPS subfamily.

The enzyme catalyses 5,6,7,8-tetrahydromethanopterin + formaldehyde = 5,10-methylenetetrahydromethanopterin + H2O. It catalyses the reaction D-ribulose 5-phosphate + formaldehyde = D-arabino-hex-3-ulose 6-phosphate. It functions in the pathway carbohydrate biosynthesis; D-ribose 5-phosphate biosynthesis. Catalyzes the condensation of formaldehyde with tetrahydromethanopterin (H(4)MPT) to 5,10-methylenetetrahydromethanopterin. Its function is as follows. Catalyzes the reversible formation of ribulose-5-phosphate and formaldehyde from 3-hexulose-6-phosphate. The protein is Bifunctional enzyme Fae/Hps of Methanothrix thermoacetophila (strain DSM 6194 / JCM 14653 / NBRC 101360 / PT) (Methanosaeta thermophila).